Consider the following 1894-residue polypeptide: Plexin-A2 (1894 aa).

An N-terminal signal peptide occupies residues 1–34 (MEQRRPWPRALEVDSRSVVLLSVVWVLLAPPAAG). In terms of domain architecture, Sema spans 35-508 (MPQFSTFHSE…SERQVTRVPV (474 aa)). Residues 35-1237 (MPQFSTFHSE…VISDSLLTLP (1203 aa)) lie on the Extracellular side of the membrane. N-linked (GlcNAc...) asparagine glycans are attached at residues Asn-76 and Asn-91. Disulfide bonds link Cys-94–Cys-103, Cys-129–Cys-137, Cys-284–Cys-405, Cys-300–Cys-356, Cys-374–Cys-393, Cys-511–Cys-528, Cys-517–Cys-559, Cys-520–Cys-537, Cys-531–Cys-543, and Cys-594–Cys-613. The N-linked (GlcNAc...) asparagine glycan is linked to Asn-327. 3 N-linked (GlcNAc...) asparagine glycosylation sites follow: Asn-598, Asn-696, and Asn-756. IPT/TIG domains lie at 858 to 951 (PQIT…QYTF), 954 to 1037 (PSVL…QFEY), 1041 to 1139 (PRVQ…KFIY), and 1143 to 1228 (PTFE…SVSV). Asn-1205 carries N-linked (GlcNAc...) asparagine glycosylation. Residues 1238 to 1258 (AIVSIAAGGSLLLIIVIIVLI) form a helical membrane-spanning segment. Residues 1259–1894 (AYKRKSREND…QLINAMSIES (636 aa)) lie on the Cytoplasmic side of the membrane. Positions 1261 to 1310 (KRKSRENDLTLKRLQMQMDNLESRVALECKEAFAELQTDINELTSDLDRS) form a coiled coil. Phosphoserine is present on Ser-1612.

The protein belongs to the plexin family. Homodimer. The PLXNA2 homodimer interacts with a SEMA6A homodimer, giving rise to a heterotetramer. Interacts directly with NRP1 and NRP2. Interacts with RND1. As to expression, detected in fetal brain.

Its subcellular location is the cell membrane. In terms of biological role, coreceptor for SEMA3A and SEMA6A. Necessary for signaling by SEMA6A and class 3 semaphorins and subsequent remodeling of the cytoskeleton. Plays a role in axon guidance, invasive growth and cell migration. Class 3 semaphorins bind to a complex composed of a neuropilin and a plexin. The plexin modulates the affinity of the complex for specific semaphorins, and its cytoplasmic domain is required for the activation of down-stream signaling events in the cytoplasm. The protein is Plexin-A2 (PLXNA2) of Homo sapiens (Human).